A 211-amino-acid chain; its full sequence is Glutathione S-transferase (211 aa).

A GST N-terminal domain is found at 3–87; sequence DNIVLYYFDA…YLSKKYNICG (85 aa). Residues 58–59, 71–72, Asp105, Lys117, and Thr121 each bind glutathione; these read QV and QS. One can recognise a GST C-terminal domain in the interval 89-211; the sequence is SELNEFYADM…YITNRKESVY (123 aa).

This sequence belongs to the GST superfamily. Homodimer. In the absence of ligands two homodimers may interact to form a tetramer.

The catalysed reaction is RX + glutathione = an S-substituted glutathione + a halide anion + H(+). Inhibited by chloroquine, cibacron blue, ferriprotoporphyrin IX (hemin) and S-hexylglutathione. Functionally, conjugation of reduced glutathione to a wide number of exogenous and endogenous hydrophobic electrophiles. May also function as a storage protein or ligandin for parasitotoxic ferriprotoporphyrin IX (hemin). In Plasmodium falciparum (isolate 3D7), this protein is Glutathione S-transferase.